Reading from the N-terminus, the 460-residue chain is DNA repair protein RAD57 (460 aa).

125–132 (GESSTGKS) serves as a coordination point for ATP.

Belongs to the RecA family.

The protein localises to the nucleus. Its function is as follows. Participates in the repair of X-ray-induced damage to DNA and in meiosis. It may act in part by stabilizing a repair complex of other RAD genes. The polypeptide is DNA repair protein RAD57 (RAD57) (Saccharomyces cerevisiae (strain ATCC 204508 / S288c) (Baker's yeast)).